A 341-amino-acid chain; its full sequence is Inositol 2-dehydrogenase (341 aa).

It belongs to the Gfo/Idh/MocA family. In terms of assembly, homotetramer.

It carries out the reaction myo-inositol + NAD(+) = scyllo-inosose + NADH + H(+). Functionally, involved in the oxidation of myo-inositol (MI) to 2-keto-myo-inositol (2KMI or 2-inosose). The sequence is that of Inositol 2-dehydrogenase from Acidothermus cellulolyticus (strain ATCC 43068 / DSM 8971 / 11B).